The sequence spans 275 residues: NH(3)-dependent NAD(+) synthetase (275 aa).

50–57 (GISGGVDS) contacts ATP. Residue aspartate 56 coordinates Mg(2+). A deamido-NAD(+)-binding site is contributed by arginine 147. Threonine 167 contributes to the ATP binding site. Position 172 (glutamate 172) interacts with Mg(2+). Positions 180 and 187 each coordinate deamido-NAD(+). Lysine 196 and threonine 218 together coordinate ATP. 267-268 (HK) serves as a coordination point for deamido-NAD(+).

It belongs to the NAD synthetase family. In terms of assembly, homodimer.

It carries out the reaction deamido-NAD(+) + NH4(+) + ATP = AMP + diphosphate + NAD(+) + H(+). It participates in cofactor biosynthesis; NAD(+) biosynthesis; NAD(+) from deamido-NAD(+) (ammonia route): step 1/1. Functionally, catalyzes the ATP-dependent amidation of deamido-NAD to form NAD. Uses ammonia as a nitrogen source. The chain is NH(3)-dependent NAD(+) synthetase from Pseudomonas aeruginosa (strain LESB58).